We begin with the raw amino-acid sequence, 208 residues long: Transmembrane protein 222 (208 aa).

Positions 1–26 (MAEAEGSSLLLLPPPPPPPRMAEVEA) are disordered. Over 1–55 (MAEAEGSSLLLLPPPPPPPRMAEVEAPTAAETDMKQYQGSGGVAMDVERSRFPYC) the chain is Extracellular. The chain crosses the membrane as a helical span at residues 56 to 76 (VVWTPIPVLTWFFPIIGHMGI). Residues 77-164 (CTSTGVIRDF…MRYNNSTNWN (88 aa)) lie on the Cytoplasmic side of the membrane. A helical transmembrane segment spans residues 165–185 (MVTLCFFCLLYGKYVSVGAFV). A topological domain (extracellular) is located at residue Lys186. Residues 187-207 (TWLPFILLLGIILTVSLVFNL) form a helical membrane-spanning segment. Arg208 is a topological domain (cytoplasmic).

In terms of tissue distribution, widely expressed. The highest expression is observed in the brain.

The protein resides in the membrane. It is found in the cell projection. It localises to the dendrite. The polypeptide is Transmembrane protein 222 (TMEM222) (Homo sapiens (Human)).